Consider the following 194-residue polypeptide: HTH-type nicotine-responsive transcriptional repressor HdnoR (194 aa).

Residues 6–66 (VDRRQQLIDA…AAAAELLQQL (61 aa)) enclose the HTH tetR-type domain. Positions 29 to 48 (SLRTIASEAKASLAAVHVCF) form a DNA-binding region, H-T-H motif.

As to quaternary structure, homodimer.

With respect to regulation, 6-hydroxy-D-nicotine and 6-hydroxy-L-nicotine prevent HdnoR from binding to the IR1 DNA. Both 6-hydroxy-nicotine enantiomers prevent DNA-protein complex formation at micromolar concentrations, with the D-enantiomer being twice as potent as the L-enantiomer. A thousand-fold higher L-nicotine concentration is required to elicit a similar effect. In terms of biological role, represses expression of the 6-hydroxy-D-nicotine oxidase (6-hdno). Acts by binding to a gene operator site consisting of two inverted repeats, IR1 (covering the 6-hdno promoter region) and IR2 (situated upstream from the 6-hdno promoter). Binding to one site may stimulate binding of the protein to the second site. The polypeptide is HTH-type nicotine-responsive transcriptional repressor HdnoR (Paenarthrobacter nicotinovorans (Arthrobacter nicotinovorans)).